The chain runs to 470 residues: MNPNQKIITIGSISLGLVVFNVLLHVVSIIVTVLILGKGENNGICNGTVVREYNETVRIERVTQWHNTNVVEYVPYWNGGTYMNNTEAICDVKGFAPFSNDNGIRIGSRGHVFVIREPFVSCSPIECRAFFLTQGSLLNDKHSNGTVKDRSPFRTLMSVEVGQSPNVYQARFEAVAWSATACHDGKKWMTVGVTGPDSKAVAVIHYGGVPTDVVNSWVGDILRTQESSCTCIQGDCYWVMTDGPANRQAQYRIYKANQGRIIGQTDVSFNGGHIEECSCYPNDGKVECVCRDNWTGTNRPVLVISPDLSYRVGYLCAGIPSDTPRGEDAQFTGSCTSPIGNQGYGVKGFGFRQGTDVWMGRTISRTSRSGFEILRIKNGWTQTSKEQVKRQVVVDNLNWSGYSGSFTLPVELSGKDCLVPCFWVEMIRGKPEEKTIWTSSSSIVMCGVDYEVADWSWHDGAILPFDIDKM.

At 1 to 14 (MNPNQKIITIGSIS) the chain is on the intravirion side. Positions 11–32 (GSISLGLVVFNVLLHVVSIIVT) are involved in apical transport and lipid raft association. A helical membrane pass occupies residues 15-35 (LGLVVFNVLLHVVSIIVTVLI). The segment at 32-86 (TVLILGKGENNGICNGTVVREYNETVRIERVTQWHNTNVVEYVPYWNGGTYMNNT) is hypervariable stalk region. The Virion surface segment spans residues 36–470 (LGKGENNGIC…AILPFDIDKM (435 aa)). N-linked (GlcNAc...) asparagine; by host glycosylation is found at Asn46, Asn54, and Asn84. Residues 89 to 470 (ICDVKGFAPF…AILPFDIDKM (382 aa)) are head of neuraminidase. Disulfide bonds link Cys90/Cys417, Cys122/Cys127, Cys182/Cys229, Cys231/Cys236, Cys277/Cys290, Cys279/Cys288, Cys316/Cys335, and Cys421/Cys446. Residue Arg116 participates in substrate binding. Residue Asn144 is glycosylated (N-linked (GlcNAc...) asparagine; by host). Asp149 serves as the catalytic Proton donor/acceptor. Position 150 (Arg150) interacts with substrate. Position 275–276 (275–276 (EE)) interacts with substrate. Position 291 (Arg291) interacts with substrate. Ca(2+) is bound at residue Asp292. N-linked (GlcNAc...) asparagine; by host glycosylation occurs at Asn293. Residues Gly296 and Asp322 each contribute to the Ca(2+) site. Arg368 provides a ligand contact to substrate. Asn398 carries an N-linked (GlcNAc...) asparagine; by host glycan. Residue Tyr402 is the Nucleophile of the active site.

Belongs to the glycosyl hydrolase 34 family. Homotetramer. Requires Ca(2+) as cofactor. N-glycosylated.

The protein localises to the virion membrane. The protein resides in the host apical cell membrane. The catalysed reaction is Hydrolysis of alpha-(2-&gt;3)-, alpha-(2-&gt;6)-, alpha-(2-&gt;8)- glycosidic linkages of terminal sialic acid residues in oligosaccharides, glycoproteins, glycolipids, colominic acid and synthetic substrates.. With respect to regulation, inhibited by the neuraminidase inhibitors zanamivir (Relenza) and oseltamivir (Tamiflu). These drugs interfere with the release of progeny virus from infected cells and are effective against all influenza strains. Resistance to neuraminidase inhibitors is quite rare. Catalyzes the removal of terminal sialic acid residues from viral and cellular glycoconjugates. Cleaves off the terminal sialic acids on the glycosylated HA during virus budding to facilitate virus release. Additionally helps virus spread through the circulation by further removing sialic acids from the cell surface. These cleavages prevent self-aggregation and ensure the efficient spread of the progeny virus from cell to cell. Otherwise, infection would be limited to one round of replication. Described as a receptor-destroying enzyme because it cleaves a terminal sialic acid from the cellular receptors. May facilitate viral invasion of the upper airways by cleaving the sialic acid moieties on the mucin of the airway epithelial cells. Likely to plays a role in the budding process through its association with lipid rafts during intracellular transport. May additionally display a raft-association independent effect on budding. Plays a role in the determination of host range restriction on replication and virulence. Sialidase activity in late endosome/lysosome traffic seems to enhance virus replication. The protein is Neuraminidase of Influenza A virus (strain A/Turkey/Ireland/1378/1983 H5N8).